The following is a 431-amino-acid chain: Divergent protein kinase domain 1B (431 aa).

The Cytoplasmic segment spans residues 1–30 (MRRLRRLVHLVLLCPFSKGLQGRLPGLRVK). The short motif at 5 to 6 (RR) is the May mediate ER retention element. A helical transmembrane segment spans residues 31 to 51 (YVLLVWLGIFVGSWMVYVHYS). Residues 52–431 (SYSELCRGHV…WREISNTNYS (380 aa)) lie on the Lumenal side of the membrane. Disulfide bonds link C57–C94 and C62–C117.

Belongs to the DIPK family. Among the many cysteines in the lumenal domain, most are probably involved in disulfide bonds.

Its subcellular location is the endoplasmic reticulum membrane. The chain is Divergent protein kinase domain 1B from Rattus norvegicus (Rat).